We begin with the raw amino-acid sequence, 363 residues long: Pyrimidine monooxygenase RutA (363 aa).

FMN is bound by residues 49-50 (IK), N115, E124, 140-141 (RY), and S190.

It belongs to the NtaA/SnaA/DszA monooxygenase family. RutA subfamily.

It carries out the reaction uracil + FMNH2 + NADH + O2 = (Z)-3-ureidoacrylate + FMN + NAD(+) + H2O + H(+). The enzyme catalyses thymine + FMNH2 + NADH + O2 = (Z)-2-methylureidoacrylate + FMN + NAD(+) + H2O + H(+). Its function is as follows. Catalyzes the pyrimidine ring opening between N-3 and C-4 by an unusual flavin hydroperoxide-catalyzed mechanism, adding oxygen atoms in the process to yield ureidoacrylate peracid, that immediately reacts with FMN forming ureidoacrylate and FMN-N(5)-oxide. The FMN-N(5)-oxide reacts spontaneously with NADH to produce FMN. Requires the flavin reductase RutF to regenerate FMN in vivo. This is Pyrimidine monooxygenase RutA from Escherichia coli O6:K15:H31 (strain 536 / UPEC).